The chain runs to 309 residues: Serine/threonine-protein phosphatase 2A catalytic subunit beta isoform (309 aa).

D57, H59, D85, and N117 together coordinate Mn(2+). The Proton donor role is filled by H118. Positions 167 and 241 each coordinate Mn(2+). Y307 carries the post-translational modification Phosphotyrosine. Position 309 is a leucine methyl ester (L309).

Belongs to the PPP phosphatase family. PP-1 subfamily. As to quaternary structure, found in a complex with at least ARL2, PPP2CB, PPP2R1A, PPP2R2A, PPP2R5E and TBCD. Interacts with TBCD. PP2A consists of a common heterodimeric core enzyme (composed of a 36 kDa catalytic subunit (subunit C) and a 65 kDa constant regulatory subunit (PR65) (subunit A)) that associates with a variety of regulatory subunits. Proteins that associate with the core dimer include three families of regulatory subunits B (the R2/B/PR55/B55, R3/B''/PR72/PR130/PR59 and R5/B'/B56 families), the 48 kDa variable regulatory subunit, viral proteins, and cell signaling molecules. Binds PPME1. May indirectly interact with SGO1, most probably through regulatory B56 subunits. Interacts with CTTNBP2NL. Interacts with PTPA. Part of the core of STRIPAK complexes composed of PP2A catalytic and scaffolding subunits, the striatins (PP2A regulatory subunits), the striatin-associated proteins MOB4, STRIP1 and STRIP2, PDCD10 and members of the STE20 kinases, such as STK24 and STK26. The cofactor is Mn(2+). In terms of processing, reversibly methyl esterified on Leu-309 by leucine carboxyl methyltransferase 1 (Lcmt1) and protein phosphatase methylesterase 1 (PPME1). Carboxyl methylation influences the affinity of the catalytic subunit for the different regulatory subunits, thereby modulating the PP2A holoenzyme's substrate specificity, enzyme activity and cellular localization. Post-translationally, phosphorylation of either threonine (by autophosphorylation-activated protein kinase) or tyrosine results in inactivation of the phosphatase. Auto-dephosphorylation has been suggested as a mechanism for reactivation. May be monoubiquitinated by NOSIP.

The protein localises to the cytoplasm. It is found in the nucleus. The protein resides in the chromosome. Its subcellular location is the centromere. It localises to the cytoskeleton. The protein localises to the spindle pole. The catalysed reaction is O-phospho-L-seryl-[protein] + H2O = L-seryl-[protein] + phosphate. The enzyme catalyses O-phospho-L-threonyl-[protein] + H2O = L-threonyl-[protein] + phosphate. Catalytic subunit of protein phosphatase 2A (PP2A), a serine/threonine phosphatase involved in the regulation of a wide variety of enzymes, signal transduction pathways, and cellular events. PP2A can modulate the activity of phosphorylase B kinase, casein kinase 2, mitogen-stimulated S6 kinase, and MAP-2 kinase. Part of the striatin-interacting phosphatase and kinase (STRIPAK) complexes. STRIPAK complexes have critical roles in protein (de)phosphorylation and are regulators of multiple signaling pathways including Hippo, MAPK, nuclear receptor and cytoskeleton remodeling. Different types of STRIPAK complexes are involved in a variety of biological processes such as cell growth, differentiation, apoptosis, metabolism and immune regulation. This chain is Serine/threonine-protein phosphatase 2A catalytic subunit beta isoform (PPP2CB), found in Oryctolagus cuniculus (Rabbit).